The sequence spans 680 residues: Methionine--tRNA ligase (680 aa).

The short motif at 15 to 25 is the 'HIGH' region element; sequence PYANGPVHIGH. C147, C150, C160, and C163 together coordinate Zn(2+). The 'KMSKS' region signature appears at 332–336; that stretch reads KISTS. Position 335 (T335) interacts with ATP. The 103-residue stretch at 578 to 680 folds into the tRNA-binding domain; it reads EFEKLDIRVG…REVKPGSEVK (103 aa).

It belongs to the class-I aminoacyl-tRNA synthetase family. MetG type 1 subfamily. Homodimer. Zn(2+) is required as a cofactor.

The protein resides in the cytoplasm. The enzyme catalyses tRNA(Met) + L-methionine + ATP = L-methionyl-tRNA(Met) + AMP + diphosphate. In terms of biological role, is required not only for elongation of protein synthesis but also for the initiation of all mRNA translation through initiator tRNA(fMet) aminoacylation. The protein is Methionine--tRNA ligase of Phocaeicola vulgatus (strain ATCC 8482 / DSM 1447 / JCM 5826 / CCUG 4940 / NBRC 14291 / NCTC 11154) (Bacteroides vulgatus).